The chain runs to 154 residues: Transcriptional repressor NrdR (154 aa).

A zinc finger lies at 3–34 (CPFCGAHDTKVIDSRLVAEGDQVRRRRECLAC). An ATP-cone domain is found at 49-139 (PRLIKQDGSR…VYRRFQDLNE (91 aa)).

The protein belongs to the NrdR family. Zn(2+) is required as a cofactor.

Its function is as follows. Negatively regulates transcription of bacterial ribonucleotide reductase nrd genes and operons by binding to NrdR-boxes. This is Transcriptional repressor NrdR from Pseudomonas aeruginosa (strain LESB58).